A 394-amino-acid chain; its full sequence is Cytochrome b561 and DOMON domain-containing protein At4g12980 (394 aa).

The signal sequence occupies residues 1–24 (MDSSYLRISLSFLFWALLLSPAVS). Residues 49-169 (LKAILHYSYD…GKVNQVWQVG (121 aa)) form the DOMON domain. One can recognise a Cytochrome b561 domain in the interval 184–381 (GPNLNSVGSL…LEVVTWVIVL (198 aa)). 2 helical membrane-spanning segments follow: residues 220–240 (IHGILNAVSWGLLFPIGAMIA) and 252–272 (AWFYLHVSCQFSAYVIGVAGW). Residues His221, His257, and His290 each contribute to the heme b site. A helical membrane pass occupies residues 292-312 (NIGICLFSIATLQMFAMLLRP). Heme b is bound at residue His326. The next 2 helical transmembrane spans lie at 328-348 (GVGYSILILGIINVFKGLSIL) and 361-381 (VIGTLGGITLLLEVVTWVIVL).

It depends on heme b as a cofactor.

The protein localises to the membrane. In terms of biological role, may act as a catecholamine-responsive trans-membrane electron transporter. In Arabidopsis thaliana (Mouse-ear cress), this protein is Cytochrome b561 and DOMON domain-containing protein At4g12980.